We begin with the raw amino-acid sequence, 183 residues long: uncharacterized protein (183 aa).

Residues 1-29 (MQCWQQPFLRFLQQPFFLATASLAGSSSS) form the signal peptide. The interval 149–183 (PGSTCDGSLKGRAYPSCVPKRDPEHSREESHPLSG) is disordered. Basic and acidic residues predominate over residues 167 to 183 (PKRDPEHSREESHPLSG).

The protein localises to the secreted. This is an uncharacterized protein from Homo sapiens (Human).